Consider the following 466-residue polypeptide: Cytochrome P450 85A (466 aa).

The helical transmembrane segment at 2–22 (ALFMAILGVLVLLLCLCSALL) threads the bilayer. Cys-414 contacts heme.

Belongs to the cytochrome P450 family. Heme is required as a cofactor.

The protein localises to the membrane. Functionally, catalyzes the C6-oxidation step in brassinosteroids biosynthesis. In Phaseolus vulgaris (Kidney bean), this protein is Cytochrome P450 85A.